The chain runs to 237 residues: Endonuclease V (237 aa).

Positions 46 and 114 each coordinate Mg(2+).

This sequence belongs to the endonuclease V family. Mg(2+) serves as cofactor.

The protein localises to the cytoplasm. The enzyme catalyses Endonucleolytic cleavage at apurinic or apyrimidinic sites to products with a 5'-phosphate.. Functionally, DNA repair enzyme involved in the repair of deaminated bases. Selectively cleaves double-stranded DNA at the second phosphodiester bond 3' to a deoxyinosine leaving behind the intact lesion on the nicked DNA. The protein is Endonuclease V of Xanthomonas axonopodis pv. citri (strain 306).